The sequence spans 377 residues: Cell division protein FtsZ (377 aa).

Residues 1–16 (MDSIVDDAIDEAEDMG) show a composition bias toward acidic residues. Residues 1-33 (MDSIVDDAIDEAEDMGDGSAEVGGPTDINRSGT) are disordered. Residues 57 to 61 (GAGGN), 144 to 146 (GTG), Glu-175, Arg-179, and Asp-222 each bind GTP.

Belongs to the FtsZ family. Homodimer. Polymerizes to form a dynamic ring structure in a strictly GTP-dependent manner. Interacts directly with several other division proteins.

Its subcellular location is the cytoplasm. Its function is as follows. Essential cell division protein that forms a contractile ring structure (Z ring) at the future cell division site. The regulation of the ring assembly controls the timing and the location of cell division. One of the functions of the FtsZ ring is to recruit other cell division proteins to the septum to produce a new cell wall between the dividing cells. Binds GTP and shows GTPase activity. The protein is Cell division protein FtsZ of Haloferax mediterranei (strain ATCC 33500 / DSM 1411 / JCM 8866 / NBRC 14739 / NCIMB 2177 / R-4) (Halobacterium mediterranei).